Here is a 370-residue protein sequence, read N- to C-terminus: Probable endopolygalacturonase A (370 aa).

The signal sequence occupies residues 1–19 (MPSAKPLFCLATLAGAALA). A propeptide spanning residues 20 to 32 (APAPSRVSDFTKR) is cleaved from the precursor. A disulfide bridge links Cys35 with Cys50. PbH1 repeat units follow at residues 162–192 (SDNL…DISE), 193–214 (STYI…AINS), 215–235 (GENI…SIGS), 244–265 (VKNV…RIKT), 273–295 (VEDI…VIEQ), and 307–352 (SNGV…DITG). Residue Asp207 is the Proton donor of the active site. A disulfide bridge links Cys209 with Cys225. His229 is an active-site residue. N-linked (GlcNAc...) asparagine glycosylation occurs at Asn246. Disulfide bonds link Cys335–Cys340 and Cys359–Cys368.

This sequence belongs to the glycosyl hydrolase 28 family.

The protein resides in the secreted. The catalysed reaction is (1,4-alpha-D-galacturonosyl)n+m + H2O = (1,4-alpha-D-galacturonosyl)n + (1,4-alpha-D-galacturonosyl)m.. Functionally, involved in maceration and soft-rotting of plant tissue. Hydrolyzes the 1,4-alpha glycosidic bonds of de-esterified pectate in the smooth region of the plant cell wall. In Aspergillus niger (strain ATCC MYA-4892 / CBS 513.88 / FGSC A1513), this protein is Probable endopolygalacturonase A (pgaA).